Consider the following 373-residue polypeptide: CCA-adding enzyme (373 aa).

Gly8 and Arg11 together coordinate ATP. Gly8 and Arg11 together coordinate CTP. Asp21 and Asp23 together coordinate Mg(2+). Arg91, Arg137, and Arg140 together coordinate ATP. The CTP site is built by Arg91, Arg137, and Arg140.

This sequence belongs to the tRNA nucleotidyltransferase/poly(A) polymerase family. Bacterial CCA-adding enzyme type 2 subfamily. The cofactor is Mg(2+).

The enzyme catalyses a tRNA precursor + 2 CTP + ATP = a tRNA with a 3' CCA end + 3 diphosphate. The catalysed reaction is a tRNA with a 3' CCA end + 2 CTP + ATP = a tRNA with a 3' CCACCA end + 3 diphosphate. Its function is as follows. Catalyzes the addition and repair of the essential 3'-terminal CCA sequence in tRNAs without using a nucleic acid template. Adds these three nucleotides in the order of C, C, and A to the tRNA nucleotide-73, using CTP and ATP as substrates and producing inorganic pyrophosphate. tRNA 3'-terminal CCA addition is required both for tRNA processing and repair. Also involved in tRNA surveillance by mediating tandem CCA addition to generate a CCACCA at the 3' terminus of unstable tRNAs. While stable tRNAs receive only 3'-terminal CCA, unstable tRNAs are marked with CCACCA and rapidly degraded. The chain is CCA-adding enzyme from Marinobacter nauticus (strain ATCC 700491 / DSM 11845 / VT8) (Marinobacter aquaeolei).